Consider the following 83-residue polypeptide: MGLGGISIWQLLIVLVIVLLLFGTKRLKGLGGDLGGAIKGFKKAMSDDEAAKQEAEEAEQKKVAAEEAAAAKTAEQKEKTEAK.

The chain crosses the membrane as a helical span at residues 2–22 (GLGGISIWQLLIVLVIVLLLF). 2 stretches are compositionally biased toward basic and acidic residues: residues 50 to 65 (AAKQ…KVAA) and 74 to 83 (AEQKEKTEAK). The disordered stretch occupies residues 50–83 (AAKQEAEEAEQKKVAAEEAAAAKTAEQKEKTEAK).

Belongs to the TatA/E family. The Tat system comprises two distinct complexes: a TatABC complex, containing multiple copies of TatA, TatB and TatC subunits, and a separate TatA complex, containing only TatA subunits. Substrates initially bind to the TatABC complex, which probably triggers association of the separate TatA complex to form the active translocon.

It is found in the cell inner membrane. Part of the twin-arginine translocation (Tat) system that transports large folded proteins containing a characteristic twin-arginine motif in their signal peptide across membranes. TatA could form the protein-conducting channel of the Tat system. The protein is Sec-independent protein translocase protein TatA of Saccharophagus degradans (strain 2-40 / ATCC 43961 / DSM 17024).